A 138-amino-acid chain; its full sequence is Probable DNA-directed RNA polymerases I, II, and III subunit RPABC2 (138 aa).

Acidic residues-rich tracts occupy residues 1 to 27 (MADD…VIEE) and 35 to 46 (EEEDDDNNVDEN). The interval 1–46 (MADDDDYQDMDNDDFVDDNEMEDVIEEEQQRPDHEEEDDDNNVDEN) is disordered.

Belongs to the archaeal Rpo6/eukaryotic RPB6 RNA polymerase subunit family. In terms of assembly, component of the RNA polymerase I (Pol I), RNA polymerase II (Pol II) and RNA polymerase III (Pol III) complexes consisting of at least 13, 12 and 17 subunits, respectively.

It localises to the nucleus. Functionally, DNA-dependent RNA polymerases catalyze the transcription of DNA into RNA using the four ribonucleoside triphosphates as substrates. Common component of RNA polymerases I, II and III which synthesize ribosomal RNA precursors, mRNA precursors and many functional non-coding RNAs, and small RNAs, such as 5S rRNA and tRNAs, respectively. Pol II is the central component of the basal RNA polymerase II transcription machinery. Pols are composed of mobile elements that move relative to each other. In Pol II, RPB6 is part of the clamp element and together with parts of RPB1 and RPB2 forms a pocket to which the RPB4-RPB7 subcomplex binds. This is Probable DNA-directed RNA polymerases I, II, and III subunit RPABC2 from Caenorhabditis briggsae.